Here is a 376-residue protein sequence, read N- to C-terminus: Erythronate-4-phosphate dehydrogenase (376 aa).

The substrate site is built by S45 and T67. D147 contacts NAD(+). The active site involves R209. D233 provides a ligand contact to NAD(+). Residue E238 is part of the active site. H255 (proton donor) is an active-site residue. Residue G258 participates in NAD(+) binding. A substrate-binding site is contributed by Y259.

The protein belongs to the D-isomer specific 2-hydroxyacid dehydrogenase family. PdxB subfamily. In terms of assembly, homodimer.

It localises to the cytoplasm. The enzyme catalyses 4-phospho-D-erythronate + NAD(+) = (R)-3-hydroxy-2-oxo-4-phosphooxybutanoate + NADH + H(+). Its pathway is cofactor biosynthesis; pyridoxine 5'-phosphate biosynthesis; pyridoxine 5'-phosphate from D-erythrose 4-phosphate: step 2/5. Functionally, catalyzes the oxidation of erythronate-4-phosphate to 3-hydroxy-2-oxo-4-phosphonooxybutanoate. This is Erythronate-4-phosphate dehydrogenase from Shewanella baltica (strain OS195).